Here is a 405-residue protein sequence, read N- to C-terminus: Phosphopentomutase (405 aa).

Positions 10, 303, 308, 344, 345, and 356 each coordinate Mn(2+).

The protein belongs to the phosphopentomutase family. Mn(2+) serves as cofactor.

Its subcellular location is the cytoplasm. The enzyme catalyses 2-deoxy-alpha-D-ribose 1-phosphate = 2-deoxy-D-ribose 5-phosphate. It carries out the reaction alpha-D-ribose 1-phosphate = D-ribose 5-phosphate. It participates in carbohydrate degradation; 2-deoxy-D-ribose 1-phosphate degradation; D-glyceraldehyde 3-phosphate and acetaldehyde from 2-deoxy-alpha-D-ribose 1-phosphate: step 1/2. Its function is as follows. Isomerase that catalyzes the conversion of deoxy-ribose 1-phosphate (dRib-1-P) and ribose 1-phosphate (Rib-1-P) to deoxy-ribose 5-phosphate (dRib-5-P) and ribose 5-phosphate (Rib-5-P), respectively. The polypeptide is Phosphopentomutase (Shewanella pealeana (strain ATCC 700345 / ANG-SQ1)).